Here is a 122-residue protein sequence, read N- to C-terminus: FAGGIVSQRCLSCICKMESGCRNVGCKMDMGSLSCGYFQIKEAYWIDCGRPGSSWKSCAASSYCASLCVQNYMKRYAKWAGCPLRCEGFAREHNGGPRGCKKGSTIGYWNRLQKISGCHGVQ.

An I-type lysozyme domain is found at 3 to 118 (GGIVSQRCLS…WNRLQKISGC (116 aa)). 7 disulfide bridges follow: C10/C86, C13/C118, C15/C21, C26/C35, C48/C68, C58/C64, and C82/C100. Residue E18 is the Proton donor of the active site. D29 functions as the Nucleophile in the catalytic mechanism. 41 to 47 (KEAYWID) serves as a coordination point for substrate. Residues Y72, H93, 93–95 (HNG), and K102 contribute to the substrate site.

It belongs to the glycosyl hydrolase 22 family. Type-I lysozyme subfamily. Monomer.

It is found in the secreted. It carries out the reaction Hydrolysis of (1-&gt;4)-beta-linkages between N-acetylmuramic acid and N-acetyl-D-glucosamine residues in a peptidoglycan and between N-acetyl-D-glucosamine residues in chitodextrins.. In terms of biological role, has bacteriolytic activity against Gram-positive bacteria M.luteus. Also has chitinase activity. The protein is Lysozyme of Meretrix lusoria (Hard clam).